A 61-amino-acid chain; its full sequence is Large ribosomal subunit protein uL30 (61 aa).

This sequence belongs to the universal ribosomal protein uL30 family. Part of the 50S ribosomal subunit.

This Nitrosomonas eutropha (strain DSM 101675 / C91 / Nm57) protein is Large ribosomal subunit protein uL30.